Reading from the N-terminus, the 169-residue chain is Large ribosomal subunit protein uL15 (169 aa).

The segment covering 1-13 has biased composition (basic and acidic residues); sequence MKLNEIRDNEGAT. The disordered stretch occupies residues 1 to 40; that stretch reads MKLNEIRDNEGATKNRMRVGRGIGSGKGKTGGRGVKGQKA. A compositionally biased stretch (gly residues) spans 21-35; that stretch reads RGIGSGKGKTGGRGV.

Belongs to the universal ribosomal protein uL15 family. Part of the 50S ribosomal subunit.

Its function is as follows. Binds to the 23S rRNA. In Methylorubrum populi (strain ATCC BAA-705 / NCIMB 13946 / BJ001) (Methylobacterium populi), this protein is Large ribosomal subunit protein uL15.